The chain runs to 122 residues: Large ribosomal subunit protein uL14 (122 aa).

The protein belongs to the universal ribosomal protein uL14 family. Part of the 50S ribosomal subunit. Forms a cluster with proteins L3 and L19. In the 70S ribosome, L14 and L19 interact and together make contacts with the 16S rRNA in bridges B5 and B8.

Functionally, binds to 23S rRNA. Forms part of two intersubunit bridges in the 70S ribosome. This Afipia carboxidovorans (strain ATCC 49405 / DSM 1227 / KCTC 32145 / OM5) (Oligotropha carboxidovorans) protein is Large ribosomal subunit protein uL14.